Reading from the N-terminus, the 416-residue chain is Beta sliding clamp (416 aa).

The protein belongs to the beta sliding clamp family. In terms of assembly, forms a ring-shaped head-to-tail homodimer around DNA which binds and tethers DNA polymerases and other proteins to the DNA. The DNA replisome complex has a single clamp-loading complex (3 tau and 1 each of delta, delta', psi and chi subunits) which binds 3 Pol III cores (1 core on the leading strand and 2 on the lagging strand) each with a beta sliding clamp dimer. Additional proteins in the replisome are other copies of gamma, psi and chi, Ssb, DNA helicase and RNA primase.

The protein resides in the cytoplasm. In terms of biological role, confers DNA tethering and processivity to DNA polymerases and other proteins. Acts as a clamp, forming a ring around DNA (a reaction catalyzed by the clamp-loading complex) which diffuses in an ATP-independent manner freely and bidirectionally along dsDNA. Initially characterized for its ability to contact the catalytic subunit of DNA polymerase III (Pol III), a complex, multichain enzyme responsible for most of the replicative synthesis in bacteria; Pol III exhibits 3'-5' exonuclease proofreading activity. The beta chain is required for initiation of replication as well as for processivity of DNA replication. This is Beta sliding clamp (dnaN) from Chlamydia trachomatis serovar D (strain ATCC VR-885 / DSM 19411 / UW-3/Cx).